A 382-amino-acid chain; its full sequence is GDP-mannose 4,6 dehydratase 2 (382 aa).

Residues 40-45 (GITGQD), 97-98 (DM), 119-123 (LAAQS), and tyrosine 134 each bind NADP(+). Threonine 166 is an active-site residue. Residues glutamate 168 and tyrosine 190 each act as nucleophile in the active site. Lysine 194, histidine 220, and arginine 225 together coordinate NADP(+).

The protein belongs to the NAD(P)-dependent epimerase/dehydratase family. GDP-mannose 4,6-dehydratase subfamily. The cofactor is NADP(+).

It carries out the reaction GDP-alpha-D-mannose = GDP-4-dehydro-alpha-D-rhamnose + H2O. It participates in nucleotide-sugar biosynthesis; GDP-L-fucose biosynthesis via de novo pathway; GDP-L-fucose from GDP-alpha-D-mannose: step 1/2. Functionally, catalyzes the conversion of GDP-D-mannose to GDP-4-dehydro-6-deoxy-D-mannose. This Caenorhabditis elegans protein is GDP-mannose 4,6 dehydratase 2 (gmd-2).